We begin with the raw amino-acid sequence, 72 residues long: Large ribosomal subunit protein eL40 (72 aa).

The protein belongs to the eukaryotic ribosomal protein eL40 family.

The protein is Large ribosomal subunit protein eL40 of Nicotiana tabacum (Common tobacco).